Reading from the N-terminus, the 173-residue chain is ATP synthase subunit b (173 aa).

Residues 12–34 traverse the membrane as a helical segment; the sequence is AFGNLYAIGWSAVNFLVLLALMY.

It belongs to the ATPase B chain family. F-type ATPases have 2 components, F(1) - the catalytic core - and F(0) - the membrane proton channel. F(1) has five subunits: alpha(3), beta(3), gamma(1), delta(1), epsilon(1). F(0) has three main subunits: a(1), b(2) and c(10-14). The alpha and beta chains form an alternating ring which encloses part of the gamma chain. F(1) is attached to F(0) by a central stalk formed by the gamma and epsilon chains, while a peripheral stalk is formed by the delta and b chains.

It localises to the cell membrane. Functionally, f(1)F(0) ATP synthase produces ATP from ADP in the presence of a proton or sodium gradient. F-type ATPases consist of two structural domains, F(1) containing the extramembraneous catalytic core and F(0) containing the membrane proton channel, linked together by a central stalk and a peripheral stalk. During catalysis, ATP synthesis in the catalytic domain of F(1) is coupled via a rotary mechanism of the central stalk subunits to proton translocation. In terms of biological role, component of the F(0) channel, it forms part of the peripheral stalk, linking F(1) to F(0). This is ATP synthase subunit b from Syntrophomonas wolfei subsp. wolfei (strain DSM 2245B / Goettingen).